A 703-amino-acid chain; its full sequence is Arf-GAP with GTPase, ANK repeat and PH domain-containing protein 9 (703 aa).

Disordered stretches follow at residues 249 to 287 (KRNG…TPTP), 299 to 323 (FTSE…TIGS), and 427 to 449 (SSTT…KHLK). Polar residues predominate over residues 271-286 (QEDPQFSVPPTANTPT). A compositionally biased stretch (basic and acidic residues) spans 303-318 (KGSDPDKERKAPENHA). The PH domain occupies 327–488 (IPIKQGMLLK…WVQAIQSQIL (162 aa)). An Arf-GAP domain is found at 509–629 (AMALQSIQNM…LFLAPLPCTE (121 aa)). Residues 524–547 (CVDCETQNPKWASLNLGVLMCIEC) form a C4-type zinc finger. An ANK repeat occupies 631-700 (SLGQQLLRAT…WTSWPEMPTG (70 aa)).

This sequence belongs to the centaurin gamma-like family.

Its function is as follows. Putative GTPase-activating protein. The protein is Arf-GAP with GTPase, ANK repeat and PH domain-containing protein 9 (AGAP9) of Homo sapiens (Human).